Reading from the N-terminus, the 338-residue chain is MSRQPILDIEGLRTVFRTRAREIVAVNDVDIVVNPGETVALVGESGSGKSVTSLSIMRLLARKVGFIDAGSIILRGKSGQTVDLAAIDEEAMRRIRGNDIGMVFQEPMTSLNPVYTIGDQIGEPLRVHRGTSRREALEAAVELLDRVGIPDARRRAGQYPHELSGGMRQRATIAMALICNPTFLIADEPTTALDVTIQAQILDLMQKLQSESGMGMLFVTHNLGVVAEIAQRVVVMYAGRIVESGPVKEVFRNPRHPYTMGLLRSMPRLGDATEMKRRGEKLNTIPGMVPGLANLPSGCAFAPRCSFAVEACHAAVPPLASVNEHHGSRCIRWQEIAA.

In terms of domain architecture, ABC transporter spans 7 to 263; it reads LDIEGLRTVF…PRHPYTMGLL (257 aa). 43 to 50 provides a ligand contact to ATP; sequence GESGSGKS.

Belongs to the ABC transporter superfamily. In terms of assembly, the complex is composed of two ATP-binding proteins (BruAb2_0796 and BruAb2_0797), two transmembrane proteins (BruAb2_0794) and a solute-binding protein (BruAb2_0792).

Its subcellular location is the cell inner membrane. In terms of biological role, probably part of an ABC transporter complex that could be involved in peptide import. Probably responsible for energy coupling to the transport system. The polypeptide is Putative peptide import ATP-binding protein BruAb2_0796 (Brucella abortus biovar 1 (strain 9-941)).